A 410-amino-acid polypeptide reads, in one-letter code: Multidrug resistance protein MdtA (410 aa).

Residues 1–21 (MNNRYPVMKKGLIVLVVIAVA) form the signal peptide. The disordered stretch occupies residues 36-56 (SDGDLSGQSAHGKRGNGAHKP).

Belongs to the membrane fusion protein (MFP) (TC 8.A.1) family. In terms of assembly, part of a tripartite efflux system composed of MdtA, MdtB and MdtC.

Its subcellular location is the cell inner membrane. This chain is Multidrug resistance protein MdtA, found in Pantoea ananatis (strain AJ13355).